Here is a 500-residue protein sequence, read N- to C-terminus: Cytochrome P450 2D14 (500 aa).

A heme-binding site is contributed by cysteine 446.

The protein belongs to the cytochrome P450 family. Requires heme as cofactor.

It is found in the endoplasmic reticulum membrane. The protein localises to the microsome membrane. The catalysed reaction is an organic molecule + reduced [NADPH--hemoprotein reductase] + O2 = an alcohol + oxidized [NADPH--hemoprotein reductase] + H2O + H(+). Its function is as follows. Cytochromes P450 are a group of heme-thiolate monooxygenases. In liver microsomes, this enzyme is involved in an NADPH-dependent electron transport pathway. It oxidizes a variety of structurally unrelated compounds, including steroids, fatty acids, and xenobiotics. This is Cytochrome P450 2D14 (CYP2D14) from Bos taurus (Bovine).